Here is a 566-residue protein sequence, read N- to C-terminus: Oxygen-dependent choline dehydrogenase (566 aa).

7–36 (DYIICGAGSAGNVLATRLTEDPDVTVLLLE) is an FAD binding site. Residues 180–202 (NGYQQEGFGPMDRTVTPKGRRAS) are disordered. His-474 (proton acceptor) is an active-site residue.

It belongs to the GMC oxidoreductase family. Requires FAD as cofactor.

The catalysed reaction is choline + A = betaine aldehyde + AH2. The enzyme catalyses betaine aldehyde + NAD(+) + H2O = glycine betaine + NADH + 2 H(+). The protein operates within amine and polyamine biosynthesis; betaine biosynthesis via choline pathway; betaine aldehyde from choline (cytochrome c reductase route): step 1/1. In terms of biological role, involved in the biosynthesis of the osmoprotectant glycine betaine. Catalyzes the oxidation of choline to betaine aldehyde and betaine aldehyde to glycine betaine at the same rate. The protein is Oxygen-dependent choline dehydrogenase of Burkholderia lata (strain ATCC 17760 / DSM 23089 / LMG 22485 / NCIMB 9086 / R18194 / 383).